The sequence spans 382 residues: Protein-arginine rhamnosyltransferase (382 aa).

18-19 (FG) provides a ligand contact to dTDP. Residue Asp-20 is the Proton acceptor of the active site. DTDP-beta-L-rhamnose-binding positions include Asp-20, Tyr-187, 250–252 (VPQ), and 268–272 (RGEDS). DTDP contacts are provided by residues Tyr-187, 250–252 (VPQ), and 268–272 (RGEDS). Glu-270 is an active-site residue.

This sequence belongs to the glycosyltransferase 104 family.

It catalyses the reaction dTDP-beta-L-rhamnose + L-arginyl-[protein] = N(omega)-(alpha-L-rhamnosyl)-L-arginyl-[protein] + dTDP + H(+). Protein-arginine rhamnosyltransferase that catalyzes the transfer of a single rhamnose to elongation factor P (EF-P) on 'Lys-32', a modification required for EF-P-dependent rescue of polyproline stalled ribosomes. The chain is Protein-arginine rhamnosyltransferase from Neisseria meningitidis serogroup B / serotype 15 (strain H44/76).